We begin with the raw amino-acid sequence, 210 residues long: Nucleoside triphosphate pyrophosphatase (210 aa).

Asp80 functions as the Proton acceptor in the catalytic mechanism.

The protein belongs to the Maf family. It depends on a divalent metal cation as a cofactor.

The protein localises to the cytoplasm. The enzyme catalyses a ribonucleoside 5'-triphosphate + H2O = a ribonucleoside 5'-phosphate + diphosphate + H(+). It carries out the reaction a 2'-deoxyribonucleoside 5'-triphosphate + H2O = a 2'-deoxyribonucleoside 5'-phosphate + diphosphate + H(+). In terms of biological role, nucleoside triphosphate pyrophosphatase. May have a dual role in cell division arrest and in preventing the incorporation of modified nucleotides into cellular nucleic acids. In Mycobacterium sp. (strain JLS), this protein is Nucleoside triphosphate pyrophosphatase.